Reading from the N-terminus, the 448-residue chain is JmjC domain-containing protein D (448 aa).

The region spanning 305–448 (EQIPQLRNDI…SLSQSFSIFP (144 aa)) is the JmjC domain.

The chain is JmjC domain-containing protein D (jcdD) from Dictyostelium discoideum (Social amoeba).